The chain runs to 347 residues: uncharacterized protein (347 aa).

At 1–44 (MWNPKKKSEALAKFKSFPYPKPGTSNVLDSKEGDTRRKYFTKTH) the chain is on the cytoplasmic side. The helical; Signal-anchor for type II membrane protein transmembrane segment at 45-62 (LHRLFVFVVLLLCSGYFL) threads the bilayer. At 63-347 (KHTLLTRPKE…RGWRKLVPFL (285 aa)) the chain is on the lumenal side.

It belongs to the glycosyltransferase 34 family.

The protein resides in the endoplasmic reticulum membrane. This is an uncharacterized protein from Schizosaccharomyces pombe (strain 972 / ATCC 24843) (Fission yeast).